A 95-amino-acid polypeptide reads, in one-letter code: Toxin HigB-1 (95 aa).

In terms of biological role, toxic component of a type II toxin-antitoxin (TA) system. Inhibits translation by cleavage of mRNA. This Vibrio cholerae serotype O1 (strain ATCC 39315 / El Tor Inaba N16961) protein is Toxin HigB-1 (higB-1).